The primary structure comprises 427 residues: Beta-1,3-galactosyl-O-glycosyl-glycoprotein beta-1,6-N-acetylglucosaminyltransferase (427 aa).

The Cytoplasmic portion of the chain corresponds to 1–9; that stretch reads MLRKLWRRK. The mediates interaction with GOLPH3 and is necessary and sufficient for localization to the Golgi stretch occupies residues 5-9; the sequence is LWRRK. Residues 10 to 32 form a helical; Signal-anchor for type II membrane protein membrane-spanning segment; sequence LFSFPTKYYFLFLAFSVVTFTVL. The stem region stretch occupies residues 33–121; the sequence is RIHQKTEFVN…EPLSKEEAGF (89 aa). Over 33 to 427 the chain is Lumenal; the sequence is RIHQKTEFVN…RHKALETLKP (395 aa). N58 and N95 each carry an N-linked (GlcNAc...) asparagine glycan. Disulfide bonds link C59/C412, C100/C172, C151/C199, and C372/C380. The interval 122–427 is catalytic; sequence PIAYSIVVHH…RHKALETLKP (306 aa). UDP-N-acetyl-alpha-D-glucosamine contacts are provided by residues 128–130, 155–157, and Y187; these read VVH and DAK. 6 residues coordinate a glycoprotein: E243, K251, R254, E320, K341, and Y358. The Nucleophile role is filled by E320. 2 residues coordinate UDP-N-acetyl-alpha-D-glucosamine: R377 and K400.

The protein belongs to the glycosyltransferase 14 family. In terms of assembly, interacts with GOLPH3; may control GCNT1 retention in the Golgi. As to expression, expressed in tracheal submucosal glands and epithelium (at protein level).

The protein resides in the golgi apparatus membrane. It carries out the reaction a 3-O-[beta-D-galactosyl-(1-&gt;3)-N-acetyl-alpha-D-galactosaminyl]-L-seryl-[protein] + UDP-N-acetyl-alpha-D-glucosamine = 3-O-{beta-D-galactosyl-(1-&gt;3)-[N-acetyl-beta-D-glucosaminyl-(1-&gt;6)]-N-acetyl-alpha-D-galactosaminyl}-L-seryl-[protein] + UDP + H(+). The enzyme catalyses a 3-O-[beta-D-galactosyl-(1-&gt;3)-N-acetyl-alpha-D-galactosaminyl]-L-threonyl-[protein] + UDP-N-acetyl-alpha-D-glucosamine = a 3-O-{beta-D-galactosyl-(1-&gt;3)-[N-acetyl-beta-D-glucosaminyl-(1-&gt;6)]-N-acetyl-alpha-D-galactosaminyl}-L-threonyl-[protein] + UDP + H(+). It catalyses the reaction a globoside GalGb4Cer + UDP-N-acetyl-alpha-D-glucosamine = a globoside GlcNAc-(beta1-&gt;6)-GalGb4Cer + UDP + H(+). The catalysed reaction is a ganglioside GA1 + UDP-N-acetyl-alpha-D-glucosamine = a ganglioside beta-D-GlcNAc-(1-&gt;6)-GA1 + UDP + H(+). The protein operates within protein modification; protein glycosylation. Its pathway is glycolipid biosynthesis. In terms of biological role, glycosyltransferase that catalyzes the transfer of an N-acetylglucosamine (GlcNAc) moiety in beta1-6 linkage from UDP-GlcNAc onto mucin-type core 1 O-glycan to form the branched mucin-type core 2 O-glycan. The catalysis is metal ion-independent and occurs with inversion of the anomeric configuration of sugar donor. Selectively involved in synthesis of mucin-type core 2 O-glycans that serve as scaffolds for the display of selectin ligand sialyl Lewis X epitope by myeloid cells, with an impact on homeostasis and recruitment to inflammatory sites. Can also act on glycolipid substrates. Transfers GlcNAc moiety to GalGb4Cer globosides in a reaction step to the synthesis of stage-specific embryonic antigen 1 (SSEA-1) determinant. Can use Galbeta1-3GalNAcalpha1- and Galbeta1-3GalNAcbeta1- oligosaccharide derivatives as acceptor substrates. The sequence is that of Beta-1,3-galactosyl-O-glycosyl-glycoprotein beta-1,6-N-acetylglucosaminyltransferase (GCNT1) from Bos taurus (Bovine).